The chain runs to 453 residues: Aldehyde dehydrogenase, dimeric NADP-preferring (453 aa).

An N-acetylserine modification is found at Ser-2. At Lys-178 the chain carries N6-acetyllysine. 188-193 (GSTAVG) contributes to the NAD(+) binding site. Lys-194 carries the N6-acetyllysine modification. Catalysis depends on residues Glu-210 and Cys-244.

The protein belongs to the aldehyde dehydrogenase family. As to quaternary structure, homodimer. Constitutively expressed in cornea, stomach, skin, bladder and lungs. Lowest expression levels in lungs and bladder.

It is found in the cytoplasm. The enzyme catalyses an aldehyde + NAD(+) + H2O = a carboxylate + NADH + 2 H(+). It carries out the reaction octanal + NAD(+) + H2O = octanoate + NADH + 2 H(+). Functionally, ALDHs play a major role in the detoxification of alcohol-derived acetaldehyde. They are involved in the metabolism of corticosteroids, biogenic amines, neurotransmitters, and lipid peroxidation. Oxidizes medium and long chain aldehydes into non-toxic fatty acids. Preferentially oxidizes aromatic aldehyde substrates. Comprises about 50 percent of corneal epithelial soluble proteins. May play a role in preventing corneal damage caused by ultraviolet light. This is Aldehyde dehydrogenase, dimeric NADP-preferring (Aldh3a1) from Mus musculus (Mouse).